A 587-amino-acid chain; its full sequence is Beta-(1--&gt;2)glucan export ATP-binding/permease protein NdvA (587 aa).

Residues 21-301 (VSLVVVANIV…MRQFATQIFE (281 aa)) enclose the ABC transmembrane type-1 domain. The next 6 membrane-spanning stretches (helical) occupy residues 23–43 (LVVV…ILFG), 57–77 (PILF…VLVA), 128–148 (GLWL…ALLI), 158–178 (LSAV…VVMS), 248–268 (MAST…VQAG), and 272–292 (VGDV…LDLM). In terms of domain architecture, ABC transporter spans 335–569 (IEFRDVSFGF…NGRFAALLRA (235 aa)). Residue 368 to 375 (GPTGAGKT) coordinates ATP.

It belongs to the ABC transporter superfamily. Beta-(1--&gt;2)glucan exporter (TC 3.A.1.108.1) family. In terms of assembly, homodimer.

It localises to the cell inner membrane. It carries out the reaction [(1-&gt;2)-beta-D-glucosyl](n)(in) + ATP + H2O = [(1-&gt;2)-beta-D-glucosyl](n)(out) + ADP + phosphate + H(+). Functionally, involved in beta-(1--&gt;2)glucan export. Transmembrane domains (TMD) form a pore in the inner membrane and the ATP-binding domain (NBD) is responsible for energy generation. This chain is Beta-(1--&gt;2)glucan export ATP-binding/permease protein NdvA, found in Rhizobium johnstonii (strain DSM 114642 / LMG 32736 / 3841) (Rhizobium leguminosarum bv. viciae).